The chain runs to 498 residues: Probable cytosol aminopeptidase (498 aa).

Mn(2+)-binding residues include Lys-269 and Asp-274. Residue Lys-281 is part of the active site. The Mn(2+) site is built by Asp-292, Asp-351, and Glu-353. Residue Arg-355 is part of the active site.

This sequence belongs to the peptidase M17 family. It depends on Mn(2+) as a cofactor.

Its subcellular location is the cytoplasm. The catalysed reaction is Release of an N-terminal amino acid, Xaa-|-Yaa-, in which Xaa is preferably Leu, but may be other amino acids including Pro although not Arg or Lys, and Yaa may be Pro. Amino acid amides and methyl esters are also readily hydrolyzed, but rates on arylamides are exceedingly low.. It catalyses the reaction Release of an N-terminal amino acid, preferentially leucine, but not glutamic or aspartic acids.. Its function is as follows. Presumably involved in the processing and regular turnover of intracellular proteins. Catalyzes the removal of unsubstituted N-terminal amino acids from various peptides. This Glaesserella parasuis serovar 5 (strain SH0165) (Haemophilus parasuis) protein is Probable cytosol aminopeptidase.